The following is a 225-amino-acid chain: Ribonuclease T (225 aa).

Residues Met1–His21 form a disordered region. One can recognise an Exonuclease domain in the interval Val33–Phe207. Residues Asp36, Glu38, His194, and Asp199 each contribute to the Mg(2+) site. His194 (proton donor/acceptor) is an active-site residue.

The protein belongs to the RNase T family. In terms of assembly, homodimer. Mg(2+) is required as a cofactor.

Trims short 3' overhangs of a variety of RNA species, leaving a one or two nucleotide 3' overhang. Responsible for the end-turnover of tRNA: specifically removes the terminal AMP residue from uncharged tRNA (tRNA-C-C-A). Also appears to be involved in tRNA biosynthesis. This is Ribonuclease T from Pseudomonas savastanoi pv. phaseolicola (strain 1448A / Race 6) (Pseudomonas syringae pv. phaseolicola (strain 1448A / Race 6)).